The sequence spans 72 residues: Putative snRNP Sm-like protein (72 aa).

In terms of domain architecture, Sm spans 4–72 (RPLDILNNAL…RGDNVVYVSP (69 aa)).

It belongs to the snRNP Sm proteins family.

The polypeptide is Putative snRNP Sm-like protein (Methanosarcina barkeri (strain Fusaro / DSM 804)).